Reading from the N-terminus, the 73-residue chain is Translation initiation factor IF-1 (73 aa).

The 73-residue stretch at 1–73 folds into the S1-like domain; that stretch reads MDIKEEAIET…TKGRIVYREK (73 aa).

The protein belongs to the IF-1 family. In terms of assembly, component of the 30S ribosomal translation pre-initiation complex which assembles on the 30S ribosome in the order IF-2 and IF-3, IF-1 and N-formylmethionyl-tRNA(fMet); mRNA recruitment can occur at any time during PIC assembly.

The protein localises to the cytoplasm. In terms of biological role, one of the essential components for the initiation of protein synthesis. Stabilizes the binding of IF-2 and IF-3 on the 30S subunit to which N-formylmethionyl-tRNA(fMet) subsequently binds. Helps modulate mRNA selection, yielding the 30S pre-initiation complex (PIC). Upon addition of the 50S ribosomal subunit IF-1, IF-2 and IF-3 are released leaving the mature 70S translation initiation complex. This chain is Translation initiation factor IF-1, found in Borreliella afzelii (strain PKo) (Borrelia afzelii).